Consider the following 338-residue polypeptide: Probable tRNA pseudouridine synthase B (338 aa).

The active-site Nucleophile is Asp80. Residues 247–322 enclose the PUA domain; that stretch reads LPRIEIRDTA…IMVDTKRVLM (76 aa).

Belongs to the pseudouridine synthase TruB family. Type 2 subfamily.

It catalyses the reaction uridine(55) in tRNA = pseudouridine(55) in tRNA. Its function is as follows. Could be responsible for synthesis of pseudouridine from uracil-55 in the psi GC loop of transfer RNAs. The protein is Probable tRNA pseudouridine synthase B of Methanopyrus kandleri (strain AV19 / DSM 6324 / JCM 9639 / NBRC 100938).